Consider the following 809-residue polypeptide: LPS-assembly protein LptD (809 aa).

Positions 1–22 (MRRALRLLPLPLSIAICLPAMA) are cleaved as a signal peptide.

The protein belongs to the LptD family. As to quaternary structure, component of the lipopolysaccharide transport and assembly complex. Interacts with LptE and LptA.

It is found in the cell outer membrane. Functionally, together with LptE, is involved in the assembly of lipopolysaccharide (LPS) at the surface of the outer membrane. In Xanthomonas euvesicatoria pv. vesicatoria (strain 85-10) (Xanthomonas campestris pv. vesicatoria), this protein is LPS-assembly protein LptD.